The primary structure comprises 312 residues: ADIPOR-like receptor IZH4 (312 aa).

Residues 1 to 38 are disordered; sequence MVSLTTIEQSPVKCETTTEKESNDTRGTDSNENAETKE. Topologically, residues 1 to 64 are cytoplasmic; the sequence is MVSLTTIEQS…YKNKSSRNES (64 aa). Over residues 16–38 the composition is skewed to basic and acidic residues; sequence TTTEKESNDTRGTDSNENAETKE. The chain crosses the membrane as a helical span at residues 65 to 85; it reads LVALIYLLGSMLSFCLLIFFT. Over 86-101 the chain is Lumenal; the sequence is DFYLIPLFPTTTTMTD. The chain crosses the membrane as a helical span at residues 102–122; the sequence is YIVFNFYLLNVFVFCMVHFIY. At 123 to 141 the chain is on the cytoplasmic side; the sequence is HFVKNISLQQHLEHWQKFS. Residues 142 to 162 form a helical membrane-spanning segment; it reads YLSNINLLISSQITILYYLFY. Residues 163 to 165 lie on the Lumenal side of the membrane; the sequence is DYV. A helical transmembrane segment spans residues 166-186; sequence FFFKIFTLLMNFIGLVAYFFI. Residues 187–201 are Cytoplasmic-facing; the sequence is LTDKLISSKRFNKTV. A helical transmembrane segment spans residues 202-222; it reads FFISVSVVCCSLPLLTAIITF. Residues 223-231 are Lumenal-facing; it reads DGLENLKER. A helical transmembrane segment spans residues 232–252; the sequence is IKVNAITWELVALVAASIIYV. The Cytoplasmic segment spans residues 253–277; that stretch reads TRFPESLFRRNKKEEGWNHSEYLFH. Residues 278 to 298 form a helical membrane-spanning segment; sequence LLISGTAFYHFFILIQSYILM. Residues 299–312 are Lumenal-facing; that stretch reads HSSLNQPELINFKS.

The protein belongs to the ADIPOR family.

The protein localises to the endoplasmic reticulum membrane. ADIPOR-like receptor involved in zinc metabolism either by altering membrane sterol content or by directly altering cellular zinc levels. The chain is ADIPOR-like receptor IZH4 (IZH4) from Saccharomyces cerevisiae (strain ATCC 204508 / S288c) (Baker's yeast).